Consider the following 231-residue polypeptide: Fibrillarin-like rRNA/tRNA 2'-O-methyltransferase (231 aa).

Residues 89 to 90 (TT), 108 to 109 (EF), 133 to 134 (DA), and 153 to 156 (DIAQ) each bind S-adenosyl-L-methionine.

This sequence belongs to the methyltransferase superfamily. Fibrillarin family. In terms of assembly, interacts with nop5. Component of box C/D small ribonucleoprotein (sRNP) particles that contain rpl7ae, FlpA and nop5, plus a guide RNA.

Its function is as follows. Involved in pre-rRNA and tRNA processing. Utilizes the methyl donor S-adenosyl-L-methionine to catalyze the site-specific 2'-hydroxyl methylation of ribose moieties in rRNA and tRNA. Site specificity is provided by a guide RNA that base pairs with the substrate. Methylation occurs at a characteristic distance from the sequence involved in base pairing with the guide RNA. This Sulfolobus acidocaldarius (strain ATCC 33909 / DSM 639 / JCM 8929 / NBRC 15157 / NCIMB 11770) protein is Fibrillarin-like rRNA/tRNA 2'-O-methyltransferase.